We begin with the raw amino-acid sequence, 89 residues long: Large ribosomal subunit protein bL27 (89 aa).

The tract at residues 1–20 (MAHKKAGGSSRNGRDSAGRR) is disordered.

This sequence belongs to the bacterial ribosomal protein bL27 family.

This is Large ribosomal subunit protein bL27 from Zymomonas mobilis subsp. mobilis (strain ATCC 31821 / ZM4 / CP4).